The chain runs to 506 residues: Maturase K (506 aa).

It belongs to the intron maturase 2 family. MatK subfamily.

It is found in the plastid. The protein resides in the chloroplast. Its function is as follows. Usually encoded in the trnK tRNA gene intron. Probably assists in splicing its own and other chloroplast group II introns. The protein is Maturase K of Phyllodoce empetriformis (Pink mountainheath).